A 693-amino-acid polypeptide reads, in one-letter code: Elongation factor G (693 aa).

Residues 8 to 282 (AKTRNIGIMA…AVIDYLPSPL (275 aa)) form the tr-type G domain. GTP-binding positions include 17 to 24 (AHVDAGKT), 81 to 85 (DTPGH), and 135 to 138 (NKMD).

This sequence belongs to the TRAFAC class translation factor GTPase superfamily. Classic translation factor GTPase family. EF-G/EF-2 subfamily.

It localises to the cytoplasm. In terms of biological role, catalyzes the GTP-dependent ribosomal translocation step during translation elongation. During this step, the ribosome changes from the pre-translocational (PRE) to the post-translocational (POST) state as the newly formed A-site-bound peptidyl-tRNA and P-site-bound deacylated tRNA move to the P and E sites, respectively. Catalyzes the coordinated movement of the two tRNA molecules, the mRNA and conformational changes in the ribosome. This Streptococcus thermophilus (strain CNRZ 1066) protein is Elongation factor G.